A 149-amino-acid polypeptide reads, in one-letter code: Small ribosomal subunit protein uS15 (149 aa).

Residues 1 to 11 (MARMHSRDRGK) are compositionally biased toward basic and acidic residues. Residues 1-25 (MARMHSRDRGKSGSTRPPRVAPPSW) are disordered.

Belongs to the universal ribosomal protein uS15 family. Part of the 30S ribosomal subunit.

The protein is Small ribosomal subunit protein uS15 of Methanopyrus kandleri (strain AV19 / DSM 6324 / JCM 9639 / NBRC 100938).